A 196-amino-acid chain; its full sequence is Imidazoleglycerol-phosphate dehydratase (196 aa).

Belongs to the imidazoleglycerol-phosphate dehydratase family.

It localises to the cytoplasm. The enzyme catalyses D-erythro-1-(imidazol-4-yl)glycerol 3-phosphate = 3-(imidazol-4-yl)-2-oxopropyl phosphate + H2O. It participates in amino-acid biosynthesis; L-histidine biosynthesis; L-histidine from 5-phospho-alpha-D-ribose 1-diphosphate: step 6/9. This is Imidazoleglycerol-phosphate dehydratase from Acidiphilium cryptum (strain JF-5).